We begin with the raw amino-acid sequence, 50 residues long: Small ribosomal subunit protein uS14 (50 aa).

Residues Cys-15, Cys-18, Cys-33, and Cys-36 each contribute to the Zn(2+) site.

Belongs to the universal ribosomal protein uS14 family. Zinc-binding uS14 subfamily. In terms of assembly, part of the 30S ribosomal subunit. Zn(2+) serves as cofactor.

Its function is as follows. Binds 16S rRNA, required for the assembly of 30S particles. The sequence is that of Small ribosomal subunit protein uS14 from Methanococcoides burtonii (strain DSM 6242 / NBRC 107633 / OCM 468 / ACE-M).